A 197-amino-acid chain; its full sequence is Molybdenum cofactor guanylyltransferase (197 aa).

Residues 10–12 (LAG), K23, N51, D69, and D99 each bind GTP. D99 serves as a coordination point for Mg(2+).

Belongs to the MobA family. Monomer. The cofactor is Mg(2+).

The protein resides in the cytoplasm. It carries out the reaction Mo-molybdopterin + GTP + H(+) = Mo-molybdopterin guanine dinucleotide + diphosphate. Functionally, transfers a GMP moiety from GTP to Mo-molybdopterin (Mo-MPT) cofactor (Moco or molybdenum cofactor) to form Mo-molybdopterin guanine dinucleotide (Mo-MGD) cofactor. The sequence is that of Molybdenum cofactor guanylyltransferase from Shewanella sp. (strain ANA-3).